The chain runs to 683 residues: Synaptic vesicle glycoprotein 2B (683 aa).

The segment covering methionine 1 to tyrosine 10 has biased composition (basic and acidic residues). Positions methionine 1–glycine 73 are disordered. Residues methionine 1–threonine 110 lie on the Cytoplasmic side of the membrane. Serine 33 carries the post-translational modification Phosphoserine. A Phosphothreonine modification is found at threonine 36. A helical transmembrane segment spans residues leucine 111–phenylalanine 131. Residues alanine 132–glycine 148 lie on the Extracellular side of the membrane. A helical membrane pass occupies residues methionine 149 to alanine 169. Topologically, residues aspartate 170–leucine 182 are cytoplasmic. A helical transmembrane segment spans residues alanine 183–phenylalanine 203. Over cysteine 204–arginine 205 the chain is Extracellular. The helical transmembrane segment at leucine 206–phenylalanine 226 threads the bilayer. Topologically, residues leucine 227–serine 237 are cytoplasmic. Residues tryptophan 238 to isoleucine 258 form a helical membrane-spanning segment. Residues proline 259–arginine 277 lie on the Extracellular side of the membrane. A helical membrane pass occupies residues valine 278 to proline 298. The Cytoplasmic segment spans residues glutamate 299–threonine 390. The chain crosses the membrane as a helical span at residues leucine 391–phenylalanine 411. Over proline 412–aspartate 535 the chain is Extracellular. Tyrosine 423 is subject to Phosphotyrosine. 3 N-linked (GlcNAc...) asparagine glycosylation sites follow: asparagine 441, asparagine 491, and asparagine 516. A helical transmembrane segment spans residues phenylalanine 536–serine 556. Over alanine 557–arginine 565 the chain is Cytoplasmic. The helical transmembrane segment at leucine 566 to glycine 586 threads the bilayer. Residues asparagine 587–methionine 592 are Extracellular-facing. Residues isoleucine 593–isoleucine 613 traverse the membrane as a helical segment. At threonine 614–alanine 626 the chain is on the cytoplasmic side. Residues phenylalanine 627–valine 649 form a helical membrane-spanning segment. Topologically, residues glycine 650–lysine 653 are extracellular. Residues valine 654–leucine 672 form a helical membrane-spanning segment. The Cytoplasmic segment spans residues arginine 673–methionine 683.

The protein belongs to the major facilitator superfamily. As to quaternary structure, interacts with SYT1 in a calcium-independent manner. Forms a complex with SYT1, syntaxin-1 and SNAP25. In terms of assembly, (Microbial infection) Interacts with C.botulinum neurotoxin type A (BoNT/A, botA). (Microbial infection) Interacts with C.botulinum neurotoxin type D (BoNT/D, botD). No evidence for its interaction with BoNT/D has also been published. Post-translationally, N-glycosylated. In terms of processing, the N-terminal cytoplasmic domain is phosphorylated by CK1. In terms of tissue distribution, expressed in ribbon synapses of the retina (at protein level). Expressed in diaphragm motor nerve terminals (at protein level). Expressed in hippocampus neurons (at protein level).

The protein resides in the cytoplasmic vesicle. It is found in the secretory vesicle. It localises to the synaptic vesicle membrane. The protein localises to the acrosome. In terms of biological role, probably plays a role in the control of regulated secretion in neural and endocrine cells. Functionally, (Microbial infection) Receptor for C.botulinum neurotoxin type A (BoNT/A, botA); the toxin probably binds via extracellular loop 4. (Microbial infection) Possible receptor for C.botulinum neurotoxin type D (BoNT/D, botD). Not a receptor for C.botulinum neurotoxin type D (BoNT/D, botD). Its function is as follows. (Microbial infection) Receptor for C.botulinum neurotoxin type E (BoNT/E); the toxin probably binds via extracellular loop 4. It probably requires glycosylation of Asn-516. This is Synaptic vesicle glycoprotein 2B (Sv2b) from Mus musculus (Mouse).